The primary structure comprises 517 residues: Fluconazole resistance protein 1 (517 aa).

The zn(2)-C6 fungal-type DNA-binding region spans 26–52; it reads CDSCRIKKTKCDGKKPCNRCTLDNKIC. Disordered regions lie at residues 106 to 137, 250 to 270, 284 to 307, and 378 to 403; these read KSVD…QNST, SAQF…QQQQ, SDIE…PPTS, and GSIQ…VSSF. The span at 113-124 shows a compositional bias: low complexity; that stretch reads SSPASSTPNSSS. Residues 250 to 260 show a composition bias toward polar residues; it reads SAQFSKGTFSP. The span at 261–270 shows a compositional bias: low complexity; that stretch reads QQQQLQQQQQ. Residues 298–307 show a composition bias toward polar residues; it reads NSGSVSPPTS. Positions 388-398 are enriched in basic residues; sequence GSVHKPVRNHS.

Its subcellular location is the nucleus. Transcription factor that acts as a negative regulator of fluconazole resistance in C.albicans. Also confers fluconazole resistance in S.cerevisiae by activation of the PDR5 gene. In Candida albicans (Yeast), this protein is Fluconazole resistance protein 1 (FCR1).